Reading from the N-terminus, the 403-residue chain is Arginine deiminase (403 aa).

Residue C388 is the Amidino-cysteine intermediate of the active site.

Belongs to the arginine deiminase family.

The protein localises to the cytoplasm. It catalyses the reaction L-arginine + H2O = L-citrulline + NH4(+). It functions in the pathway amino-acid degradation; L-arginine degradation via ADI pathway; carbamoyl phosphate from L-arginine: step 1/2. The chain is Arginine deiminase from Mycoplasma capricolum subsp. capricolum (strain California kid / ATCC 27343 / NCTC 10154).